A 390-amino-acid chain; its full sequence is Magnesium-protoporphyrin IX monomethyl ester [oxidative] cyclase (390 aa).

It belongs to the AcsF family. It depends on Fe cation as a cofactor.

It carries out the reaction Mg-protoporphyrin IX 13-monomethyl ester + 3 NADPH + 3 O2 + 2 H(+) = 3,8-divinyl protochlorophyllide a + 3 NADP(+) + 5 H2O. Its pathway is porphyrin-containing compound metabolism; chlorophyll biosynthesis (light-independent). Functionally, catalyzes the formation of the isocyclic ring in chlorophyll biosynthesis. Mediates the cyclase reaction, which results in the formation of divinylprotochlorophyllide (Pchlide) characteristic of all chlorophylls from magnesium-protoporphyrin IX 13-monomethyl ester (MgPMME). This Prochlorococcus marinus (strain AS9601) protein is Magnesium-protoporphyrin IX monomethyl ester [oxidative] cyclase.